Consider the following 360-residue polypeptide: uncharacterized protein (360 aa).

3 Solcar repeats span residues 34–153 (VGVL…LSVW), 172–256 (PDWS…FKTN), and 266–355 (NPFV…FKFL). 6 helical membrane-spanning segments follow: residues 40-60 (VSAS…LDVV), 125-145 (LWSG…FYFT), 178-198 (AVAG…IEMI), 225-247 (ISSF…GIYW), 269-289 (VVSF…THPF), and 327-348 (FSSG…MISF).

It belongs to the mitochondrial carrier (TC 2.A.29) family.

It is found in the mitochondrion inner membrane. This is an uncharacterized protein from Caenorhabditis elegans.